The sequence spans 950 residues: Glycine dehydrogenase (decarboxylating) (950 aa).

At K698 the chain carries N6-(pyridoxal phosphate)lysine.

Belongs to the GcvP family. The glycine cleavage system is composed of four proteins: P, T, L and H. The cofactor is pyridoxal 5'-phosphate.

It carries out the reaction N(6)-[(R)-lipoyl]-L-lysyl-[glycine-cleavage complex H protein] + glycine + H(+) = N(6)-[(R)-S(8)-aminomethyldihydrolipoyl]-L-lysyl-[glycine-cleavage complex H protein] + CO2. In terms of biological role, the glycine cleavage system catalyzes the degradation of glycine. The P protein binds the alpha-amino group of glycine through its pyridoxal phosphate cofactor; CO(2) is released and the remaining methylamine moiety is then transferred to the lipoamide cofactor of the H protein. The sequence is that of Glycine dehydrogenase (decarboxylating) from Neisseria meningitidis serogroup C / serotype 2a (strain ATCC 700532 / DSM 15464 / FAM18).